The primary structure comprises 159 residues: Large ribosomal subunit protein uL10 (159 aa).

Belongs to the universal ribosomal protein uL10 family. In terms of assembly, part of the ribosomal stalk of the 50S ribosomal subunit. The N-terminus interacts with L11 and the large rRNA to form the base of the stalk. The C-terminus forms an elongated spine to which L12 dimers bind in a sequential fashion forming a multimeric L10(L12)X complex.

In terms of biological role, forms part of the ribosomal stalk, playing a central role in the interaction of the ribosome with GTP-bound translation factors. This is Large ribosomal subunit protein uL10 from Sulfurimonas denitrificans (strain ATCC 33889 / DSM 1251) (Thiomicrospira denitrificans (strain ATCC 33889 / DSM 1251)).